The following is a 522-amino-acid chain: L-aspartate oxidase (522 aa).

Residues 16–19 (SGMA) and 45–52 (SSAWAQGG) each bind FAD. Arg-277 serves as the catalytic Proton donor/acceptor. Residues Glu-360 and 376 to 377 (SL) contribute to the FAD site.

This sequence belongs to the FAD-dependent oxidoreductase 2 family. NadB subfamily. FAD is required as a cofactor.

Its subcellular location is the cytoplasm. The catalysed reaction is L-aspartate + O2 = iminosuccinate + H2O2. It functions in the pathway cofactor biosynthesis; NAD(+) biosynthesis; iminoaspartate from L-aspartate (oxidase route): step 1/1. Its function is as follows. Catalyzes the oxidation of L-aspartate to iminoaspartate, the first step in the de novo biosynthesis of NAD(+). The chain is L-aspartate oxidase (nadB) from Agrobacterium fabrum (strain C58 / ATCC 33970) (Agrobacterium tumefaciens (strain C58)).